The following is a 170-amino-acid chain: Neurotensin/neuromedin N (170 aa).

The signal sequence occupies residues 1–23; it reads MMAGMKIQLVCMILLAFSSWSLC.

It belongs to the neurotensin family. In terms of assembly, interacts with NTSR1. Interacts with SORT1. Interacts with SORL1. Neurotensin is cleaved and degraded by Angiotensin-converting enzyme (ACE) and neprilysin (MME). In terms of tissue distribution, brain and gut.

It is found in the secreted. The protein localises to the cytoplasmic vesicle. It localises to the secretory vesicle. Functionally, neurotensin may play an endocrine or paracrine role in the regulation of fat metabolism. It causes contraction of smooth muscle. The sequence is that of Neurotensin/neuromedin N (NTS) from Bos taurus (Bovine).